A 371-amino-acid polypeptide reads, in one-letter code: Protein NDRG2 (371 aa).

The segment at 1–22 (MAELQEVQITEEKPLLPGQTPE) is disordered. Position 2 is an N-acetylalanine (Ala2). Thr20 bears the Phosphothreonine mark. A phosphoserine mark is found at Ser326 and Ser328. Thr330 carries the post-translational modification Phosphothreonine; by SGK1. Ser332 carries the post-translational modification Phosphoserine; by PKC/PRKCQ or SGK1. Thr334 carries the post-translational modification Phosphothreonine. Residues 334 to 371 (TSAASIDGSRSRSRTLSQSSESGTLPSGPPGHTMEVSC) are disordered. Phosphoserine is present on residues Ser335, Ser338, and Ser344. Thr348 is subject to Phosphothreonine; by PKB/AKT1 or SGK1. 4 positions are modified to phosphoserine: Ser350, Ser352, Ser353, and Ser355. The residue at position 357 (Thr357) is a Phosphothreonine. A Phosphoserine modification is found at Ser370.

It belongs to the NDRG family. Interacts with CTNNB1. Expressed at highest levels in brain, heart and liver, and at lower levels in kidney, colon, skeletal muscle, adrenal gland, ovary and uterus (at protein level).

The protein localises to the cytoplasm. The protein resides in the perinuclear region. It is found in the cell projection. Its subcellular location is the growth cone. In terms of biological role, contributes to the regulation of the Wnt signaling pathway. Down-regulates CTNNB1-mediated transcriptional activation of target genes, such as CCND1, and may thereby act as tumor suppressor. May be involved in dendritic cell and neuron differentiation. The sequence is that of Protein NDRG2 (Ndrg2) from Mus musculus (Mouse).